The following is a 417-amino-acid chain: Indole-3-pyruvate monooxygenase YUCCA6 (417 aa).

36 to 41 (GAGPSG) provides a ligand contact to FAD. 204 to 209 (GCGNSG) is a binding site for NADP(+).

Belongs to the FMO family. The cofactor is FAD. In terms of tissue distribution, highly expressed in roots but modestly expressed in the cauline leaves and flowers. Expressed in anthers.

It is found in the cytoplasm. The enzyme catalyses indole-3-pyruvate + NADPH + O2 + H(+) = (indol-3-yl)acetate + CO2 + NADP(+) + H2O. The protein operates within plant hormone metabolism; auxin biosynthesis. Involved in auxin biosynthesis via the indole-3-pyruvic acid (IPA) pathway. Also able to convert in vitro phenyl pyruvate (PPA) to phenyl acetic acid (PAA). Required for the formation of floral organs and vascular tissues. Belongs to the set of redundant YUCCA genes probably responsible for auxin biosynthesis in shoots. The chain is Indole-3-pyruvate monooxygenase YUCCA6 (YUC6) from Arabidopsis thaliana (Mouse-ear cress).